Here is a 137-residue protein sequence, read N- to C-terminus: Seminal plasma sperm motility inhibitor (137 aa).

An N-terminal signal peptide occupies residues 1 to 21 (MKLGSAIPWALLLSTXTLVST). An intrachain disulfide couples Cys30 to Cys51. In terms of domain architecture, CUB spans 30–131 (CGGFLKNYSG…SSFNVYFYGI (102 aa)). A glycan (N-linked (GlcNAc...) asparagine) is linked at Asn36.

The protein belongs to the spermadhesin family. In terms of tissue distribution, seminal plasma or sperm.

Its subcellular location is the secreted. Functionally, inhibitor of sperm motility. The polypeptide is Seminal plasma sperm motility inhibitor (SPMI) (Sus scrofa (Pig)).